A 184-amino-acid polypeptide reads, in one-letter code: ATP synthase subunit b, chloroplastic (184 aa).

Residues 26–48 (ILATNLINLSVVLGVLIFFGKGV) traverse the membrane as a helical segment.

It belongs to the ATPase B chain family. In terms of assembly, F-type ATPases have 2 components, F(1) - the catalytic core - and F(0) - the membrane proton channel. F(1) has five subunits: alpha(3), beta(3), gamma(1), delta(1), epsilon(1). F(0) has four main subunits: a(1), b(1), b'(1) and c(10-14). The alpha and beta chains form an alternating ring which encloses part of the gamma chain. F(1) is attached to F(0) by a central stalk formed by the gamma and epsilon chains, while a peripheral stalk is formed by the delta, b and b' chains.

The protein resides in the plastid. It localises to the chloroplast thylakoid membrane. In terms of biological role, f(1)F(0) ATP synthase produces ATP from ADP in the presence of a proton or sodium gradient. F-type ATPases consist of two structural domains, F(1) containing the extramembraneous catalytic core and F(0) containing the membrane proton channel, linked together by a central stalk and a peripheral stalk. During catalysis, ATP synthesis in the catalytic domain of F(1) is coupled via a rotary mechanism of the central stalk subunits to proton translocation. Component of the F(0) channel, it forms part of the peripheral stalk, linking F(1) to F(0). The protein is ATP synthase subunit b, chloroplastic of Acorus calamus (Sweet flag).